The sequence spans 156 residues: Small ribosomal subunit protein uS7cz/uS7cy (156 aa).

The protein belongs to the universal ribosomal protein uS7 family. Part of the 30S ribosomal subunit.

It localises to the plastid. It is found in the chloroplast. In terms of biological role, one of the primary rRNA binding proteins, it binds directly to 16S rRNA where it nucleates assembly of the head domain of the 30S subunit. The polypeptide is Small ribosomal subunit protein uS7cz/uS7cy (rps7-A) (Saccharum hybrid (Sugarcane)).